The following is a 158-amino-acid chain: Ribosome maturation factor RimP (158 aa).

The protein belongs to the RimP family.

It localises to the cytoplasm. Required for maturation of 30S ribosomal subunits. This is Ribosome maturation factor RimP from Lactobacillus delbrueckii subsp. bulgaricus (strain ATCC 11842 / DSM 20081 / BCRC 10696 / JCM 1002 / NBRC 13953 / NCIMB 11778 / NCTC 12712 / WDCM 00102 / Lb 14).